We begin with the raw amino-acid sequence, 56 residues long: Prokaryotic ubiquitin-like protein UBact (56 aa).

The interval 1-56 (MPDQAQKTRPVGPGPSGGGEGPGSPKVEKPNTEELLKRMRKVDPDQAKRYRQRTGQ) is disordered. The span at 26 to 48 (KVEKPNTEELLKRMRKVDPDQAK) shows a compositional bias: basic and acidic residues. At glutamine 56 the chain carries Deamidated glutamine. Glutamine 56 is covalently cross-linked (Isoglutamyl lysine isopeptide (Gln-Lys) (interchain with K-? in acceptor proteins)).

It belongs to the ubiquitin-like protein UBact family. In terms of processing, may be modified by deamidation of its C-terminal glutamine to glutamate by the adjacently encoded deamidase. This could be a prerequisite to the subsequent conjugation, as shown in the other prokaryotic ubiquitin-like protein Pup.

Its function is as follows. May function as a protein modifier covalently attached to lysine residues of substrate proteins. This may serve to target the modified proteins for degradation by proteasomes. The protein is Prokaryotic ubiquitin-like protein UBact of Pedosphaera parvula (strain Ellin514).